The sequence spans 289 residues: MVVVTGQSKGSGDPDEAMSSSDAEDDFQEPATPTATQAGQALPLLPQQFPEVVPLNVGGMHFTTRLSTLRRYEDTMLAAMFSGRHYIPTDAEGRYFIDRDGTYFGDILNFLRSGDLPPRERVRPVYKEAQYYSIGPLLDHLEDVQPLKGEKVRQAFLGLMPYYKDHLERIIEIAKLRAVQRKARFAKLKVCVFKEEMPITPYECPHFNSLRFERSESEAKLFEHHCEVDVSFGPWEAVADVYDLLHCIVTDLSDRGITVDHQCIGVCDKHLINHYYCKRPIYEFKITWW.

The segment covering 1–10 (MVVVTGQSKG) has biased composition (polar residues). The tract at residues 1 to 35 (MVVVTGQSKGSGDPDEAMSSSDAEDDFQEPATPTA) is disordered. The BTB domain maps to 51 to 149 (EVVPLNVGGM…HLEDVQPLKG (99 aa)).

The protein resides in the cell membrane. The protein localises to the cytoplasm. It is found in the cytosol. May be involved in the control of excitability of cortical neurons. The polypeptide is BTB/POZ domain-containing protein KCTD7 (KCTD7) (Gallus gallus (Chicken)).